Here is a 1407-residue protein sequence, read N- to C-terminus: DNA-directed RNA polymerase subunit beta' (1407 aa).

4 residues coordinate Zn(2+): cysteine 70, cysteine 72, cysteine 85, and cysteine 88. Residues aspartate 460, aspartate 462, and aspartate 464 each contribute to the Mg(2+) site. 4 residues coordinate Zn(2+): cysteine 814, cysteine 888, cysteine 895, and cysteine 898.

It belongs to the RNA polymerase beta' chain family. The RNAP catalytic core consists of 2 alpha, 1 beta, 1 beta' and 1 omega subunit. When a sigma factor is associated with the core the holoenzyme is formed, which can initiate transcription. Mg(2+) is required as a cofactor. The cofactor is Zn(2+).

The catalysed reaction is RNA(n) + a ribonucleoside 5'-triphosphate = RNA(n+1) + diphosphate. In terms of biological role, DNA-dependent RNA polymerase catalyzes the transcription of DNA into RNA using the four ribonucleoside triphosphates as substrates. The sequence is that of DNA-directed RNA polymerase subunit beta' from Citrobacter koseri (strain ATCC BAA-895 / CDC 4225-83 / SGSC4696).